A 1169-amino-acid polypeptide reads, in one-letter code: Transcription-repair-coupling factor (1169 aa).

In terms of domain architecture, Helicase ATP-binding spans aspartate 634–isoleucine 795. Glycine 647–threonine 654 is a binding site for ATP. A DEEQ box motif is present at residues aspartate 748–glutamine 751. In terms of domain architecture, Helicase C-terminal spans valine 809 to asparagine 970.

The protein in the N-terminal section; belongs to the UvrB family. In the C-terminal section; belongs to the helicase family. RecG subfamily.

The protein localises to the cytoplasm. Functionally, couples transcription and DNA repair by recognizing RNA polymerase (RNAP) stalled at DNA lesions. Mediates ATP-dependent release of RNAP and its truncated transcript from the DNA, and recruitment of nucleotide excision repair machinery to the damaged site. This is Transcription-repair-coupling factor from Staphylococcus epidermidis (strain ATCC 12228 / FDA PCI 1200).